A 270-amino-acid chain; its full sequence is 4-hydroxy-tetrahydrodipicolinate reductase (270 aa).

NAD(+) is bound by residues 11-16 and Glu-37; that span reads GASGRM. Position 38 (Arg-38) interacts with NADP(+). NAD(+)-binding positions include 101-103 and 125-128; these read GTT and SPNM. The Proton donor/acceptor role is filled by His-158. His-159 contacts (S)-2,3,4,5-tetrahydrodipicolinate. Lys-162 functions as the Proton donor in the catalytic mechanism. 168–169 provides a ligand contact to (S)-2,3,4,5-tetrahydrodipicolinate; it reads GT.

It belongs to the DapB family.

The protein localises to the cytoplasm. It carries out the reaction (S)-2,3,4,5-tetrahydrodipicolinate + NAD(+) + H2O = (2S,4S)-4-hydroxy-2,3,4,5-tetrahydrodipicolinate + NADH + H(+). It catalyses the reaction (S)-2,3,4,5-tetrahydrodipicolinate + NADP(+) + H2O = (2S,4S)-4-hydroxy-2,3,4,5-tetrahydrodipicolinate + NADPH + H(+). It functions in the pathway amino-acid biosynthesis; L-lysine biosynthesis via DAP pathway; (S)-tetrahydrodipicolinate from L-aspartate: step 4/4. In terms of biological role, catalyzes the conversion of 4-hydroxy-tetrahydrodipicolinate (HTPA) to tetrahydrodipicolinate. The chain is 4-hydroxy-tetrahydrodipicolinate reductase from Shewanella denitrificans (strain OS217 / ATCC BAA-1090 / DSM 15013).